Consider the following 701-residue polypeptide: MPRKTPIERYRNIGISAHIDAGKTTTTERILFYTGVSHKIGEVHDGAATMDWMEQEQERGITITSAATTAFWKGMAGNYPEHRINIIDTPGHVDFTIEVERSMRVLDGACMVYDSVGGVQPQSETVWRQANKYKVPRIAFVNKMDRIGADFFRVQKQIGERLKGVAVPIQIPIGAEDHFQGVVDLVKMKAIVWDDESQGVKFTYEDIPANLAELAHEWREKMVEAAAEASEELLEKYLHDHESLTEDEIKAALRKRTIANEIVPMLCGSAFKNKGVQAMLDAVIDYLPSPADVPAILGHDLHDKEAERHPNDEDPFSSLAFKIMTDPFVGQLIFFRVYSGVVESGDTVLNATKDKKERLGRILQMHANERKEIKEVRAGDIAAAVGLKEATTGDTLCDPAHPIVLERMIFPEPVISQAVEPKTKADQEKMGLALNRLAQEDPSFRVQTDEESGQTIISGMGELHLEILVDRMKREFGVEATVGKPQVAYRETVRTPAKDVEGKFVKQSGGRGQYGHAVITLEPNPGKGYEFVDAIKGGVIPREYIPSVDKGIQETLKSGVLAGYPVVDVKVTLTFGSYHDVDSNENAFRMAGSMAFKEAMRRAKPVLLEPMMAVEVETPEDFMGNVMGDLSSRRGIVQGMEDIAGGGGKLVRAEVPLAEMFGYSTSLRSATQGRATYTMEFKQYAETPANVSEGVISAKVK.

Residues 8 to 291 (ERYRNIGISA…AVIDYLPSPA (284 aa)) enclose the tr-type G domain. GTP is bound by residues 17-24 (AHIDAGKT), 88-92 (DTPGH), and 142-145 (NKMD).

It belongs to the TRAFAC class translation factor GTPase superfamily. Classic translation factor GTPase family. EF-G/EF-2 subfamily.

The protein localises to the cytoplasm. Catalyzes the GTP-dependent ribosomal translocation step during translation elongation. During this step, the ribosome changes from the pre-translocational (PRE) to the post-translocational (POST) state as the newly formed A-site-bound peptidyl-tRNA and P-site-bound deacylated tRNA move to the P and E sites, respectively. Catalyzes the coordinated movement of the two tRNA molecules, the mRNA and conformational changes in the ribosome. The sequence is that of Elongation factor G 2 from Burkholderia lata (strain ATCC 17760 / DSM 23089 / LMG 22485 / NCIMB 9086 / R18194 / 383).